The following is a 399-amino-acid chain: Glucose-1-phosphate adenylyltransferase (399 aa).

Alpha-D-glucose 1-phosphate is bound by residues Gly158, 174–175, and Ser192; that span reads EK.

It belongs to the bacterial/plant glucose-1-phosphate adenylyltransferase family. As to quaternary structure, homotetramer.

It carries out the reaction alpha-D-glucose 1-phosphate + ATP + H(+) = ADP-alpha-D-glucose + diphosphate. It functions in the pathway glycan biosynthesis; glycogen biosynthesis. Functionally, involved in the biosynthesis of ADP-glucose, a building block required for the elongation reactions to produce glycogen. Catalyzes the reaction between ATP and alpha-D-glucose 1-phosphate (G1P) to produce pyrophosphate and ADP-Glc. In Streptomyces coelicolor (strain ATCC BAA-471 / A3(2) / M145), this protein is Glucose-1-phosphate adenylyltransferase.